The chain runs to 1298 residues: Phosphoribosylformylglycinamidine synthase (1298 aa).

The interval 303 to 327 is disordered; the sequence is FPGAATGSGGEIRDEGATGRGAKPK. ATP-binding positions include 305 to 316, 384 to 386, and alanine 676; these read GAATGSGGEIRD and TGY. Residues aspartate 677, glutamate 716, asparagine 720, and aspartate 884 each contribute to the Mg(2+) site. Position 886 (serine 886) interacts with ATP. The Glutamine amidotransferase type-1 domain maps to 1045-1298; that stretch reads VAVLREQGVN…MFRNARAWVN (254 aa). Residue cysteine 1138 is the Nucleophile of the active site. Catalysis depends on residues histidine 1263 and glutamate 1265.

It in the N-terminal section; belongs to the FGAMS family. Monomer.

It is found in the cytoplasm. It carries out the reaction N(2)-formyl-N(1)-(5-phospho-beta-D-ribosyl)glycinamide + L-glutamine + ATP + H2O = 2-formamido-N(1)-(5-O-phospho-beta-D-ribosyl)acetamidine + L-glutamate + ADP + phosphate + H(+). Its pathway is purine metabolism; IMP biosynthesis via de novo pathway; 5-amino-1-(5-phospho-D-ribosyl)imidazole from N(2)-formyl-N(1)-(5-phospho-D-ribosyl)glycinamide: step 1/2. Functionally, phosphoribosylformylglycinamidine synthase involved in the purines biosynthetic pathway. Catalyzes the ATP-dependent conversion of formylglycinamide ribonucleotide (FGAR) and glutamine to yield formylglycinamidine ribonucleotide (FGAM) and glutamate. The polypeptide is Phosphoribosylformylglycinamidine synthase (Pseudomonas syringae pv. tomato (strain ATCC BAA-871 / DC3000)).